The chain runs to 88 residues: Small ribosomal subunit protein uS15 (88 aa).

The interval 1 to 23 (MIASSVKAEVVKSNARSANDTGS) is disordered. Positions 14 to 23 (NARSANDTGS) are enriched in polar residues.

Belongs to the universal ribosomal protein uS15 family. In terms of assembly, part of the 30S ribosomal subunit. Forms a bridge to the 50S subunit in the 70S ribosome, contacting the 23S rRNA.

One of the primary rRNA binding proteins, it binds directly to 16S rRNA where it helps nucleate assembly of the platform of the 30S subunit by binding and bridging several RNA helices of the 16S rRNA. Its function is as follows. Forms an intersubunit bridge (bridge B4) with the 23S rRNA of the 50S subunit in the ribosome. This is Small ribosomal subunit protein uS15 from Delftia acidovorans (strain DSM 14801 / SPH-1).